A 309-amino-acid chain; its full sequence is Ribokinase (309 aa).

Residues 14–16, 42–46, and glutamate 143 each bind substrate; these read NAD and GKGAN. ATP-binding positions include asparagine 187 and 223–228; that span reads TLGSRG. The K(+) site is built by aspartate 249 and isoleucine 251. Residues 254 to 255 and histidine 279 contribute to the ATP site; that span reads GD. Aspartate 255 is a substrate binding site. Residue aspartate 255 is the Proton acceptor of the active site. Residues alanine 285, arginine 288, glycine 290, and serine 294 each coordinate K(+).

It belongs to the carbohydrate kinase PfkB family. Ribokinase subfamily. Homodimer. Mg(2+) is required as a cofactor.

The protein resides in the cytoplasm. The enzyme catalyses D-ribose + ATP = D-ribose 5-phosphate + ADP + H(+). Its pathway is carbohydrate metabolism; D-ribose degradation; D-ribose 5-phosphate from beta-D-ribopyranose: step 2/2. With respect to regulation, activated by a monovalent cation that binds near, but not in, the active site. The most likely occupant of the site in vivo is potassium. Ion binding induces a conformational change that may alter substrate affinity. In terms of biological role, catalyzes the phosphorylation of ribose at O-5 in a reaction requiring ATP and magnesium. The resulting D-ribose-5-phosphate can then be used either for sythesis of nucleotides, histidine, and tryptophan, or as a component of the pentose phosphate pathway. In Escherichia coli O157:H7, this protein is Ribokinase.